The sequence spans 407 residues: Indoleamine 2,3-dioxygenase 1 (407 aa).

H350 serves as a coordination point for heme b. The tract at residues S362–P407 is disordered. Residues K365–E374 show a composition bias toward basic and acidic residues.

It belongs to the indoleamine 2,3-dioxygenase family. Monomer. The cofactor is heme b. In terms of tissue distribution, highly expressed in epididymis, duodemum, jejunum, ileum, colon and spleen. Highly expressed in epididymis, prostate, duodemum, jejunum, ileum, colon and spleen, not detected in the liver (at protein level). Expressed in tumors only upon exposure to IFN gamma. Constitutively expressed in placenta in trophoblast cells. Expression is restricted to perinuclear regions of primary trophoblast giant cells (TGCs) of fetal origin at mid-gestation (10.5 dpc). After placentation (14 dpc), no IDO expression was detected at the maternal-fetal interface.

The protein resides in the cytoplasm. The protein localises to the cytosol. The catalysed reaction is D-tryptophan + O2 = N-formyl-D-kynurenine. The enzyme catalyses L-tryptophan + O2 = N-formyl-L-kynurenine. With respect to regulation, activity is inhibited by and MTH-trp (methylthiohydantoin-DL-tryptophan), modestly inhibited by L-1MT (1-methyl-L-tryptophan) but not D-1MT (1-methyl-D-tryptophan). Functionally, catalyzes the first and rate limiting step of the catabolism of the essential amino acid tryptophan along the kynurenine pathway. Involved in the peripheral immune tolerance, contributing to maintain homeostasis by preventing autoimmunity or immunopathology that would result from uncontrolled and overreacting immune responses. Tryptophan shortage inhibits T lymphocytes division and accumulation of tryptophan catabolites induces T-cell apoptosis and differentiation of regulatory T-cells. Acts as a suppressor of anti-tumor immunity. Limits the growth of intracellular pathogens by depriving tryptophan. Protects the fetus from maternal immune rejection. The chain is Indoleamine 2,3-dioxygenase 1 from Mus musculus (Mouse).